Reading from the N-terminus, the 190-residue chain is dCTP deaminase (190 aa).

Lys113 to Arg118 serves as a coordination point for dCTP. Glu139 functions as the Proton donor/acceptor in the catalytic mechanism. Gln158, Tyr172, Lys181, and Gln182 together coordinate dCTP.

This sequence belongs to the dCTP deaminase family. As to quaternary structure, homotrimer.

The enzyme catalyses dCTP + H2O + H(+) = dUTP + NH4(+). Its pathway is pyrimidine metabolism; dUMP biosynthesis; dUMP from dCTP (dUTP route): step 1/2. In terms of biological role, catalyzes the deamination of dCTP to dUTP. This is dCTP deaminase from Chlamydia caviae (strain ATCC VR-813 / DSM 19441 / 03DC25 / GPIC) (Chlamydophila caviae).